An 89-amino-acid chain; its full sequence is Small ribosomal subunit protein bS20 (89 aa).

Basic residues-rich tracts occupy residues 1–10 (MANIKSKIKS) and 17–29 (ARKR…SRVK). Positions 1-29 (MANIKSKIKSIKTMEKARKRNSMIKSRVK) are disordered.

It belongs to the bacterial ribosomal protein bS20 family.

Functionally, binds directly to 16S ribosomal RNA. This Mycoplasmopsis pulmonis (strain UAB CTIP) (Mycoplasma pulmonis) protein is Small ribosomal subunit protein bS20.